Reading from the N-terminus, the 282-residue chain is Putative polysaccharide deacetylase YheN (282 aa).

A helical membrane pass occupies residues 15-35; the sequence is LAFKFASLAVLCVLLLLMVIL. The NodB homology domain occupies 85 to 271; the sequence is KTVYLTFDDG…KLKEKGYSFG (187 aa).

This sequence belongs to the polysaccharide deacetylase family.

It is found in the cell membrane. This Bacillus subtilis (strain 168) protein is Putative polysaccharide deacetylase YheN (yheN).